A 60-amino-acid chain; its full sequence is Large ribosomal subunit protein uL30 (60 aa).

It belongs to the universal ribosomal protein uL30 family. In terms of assembly, part of the 50S ribosomal subunit.

In Burkholderia mallei (strain NCTC 10247), this protein is Large ribosomal subunit protein uL30.